The chain runs to 466 residues: tRNA-2-methylthio-N(6)-dimethylallyladenosine synthase (466 aa).

The region spanning 21-137 (GSYWITTFGC…LEDLLNQVDN (117 aa)) is the MTTase N-terminal domain. Positions 30, 66, 100, 172, 176, and 179 each coordinate [4Fe-4S] cluster. A Radical SAM core domain is found at 158 to 395 (RDSNICAWVN…NLLVEQTAKD (238 aa)). One can recognise a TRAM domain in the interval 398-466 (TRYHNQIVEV…AFSLTGSPIQ (69 aa)).

Belongs to the methylthiotransferase family. MiaB subfamily. As to quaternary structure, monomer. [4Fe-4S] cluster serves as cofactor.

The protein localises to the cytoplasm. It catalyses the reaction N(6)-dimethylallyladenosine(37) in tRNA + (sulfur carrier)-SH + AH2 + 2 S-adenosyl-L-methionine = 2-methylsulfanyl-N(6)-dimethylallyladenosine(37) in tRNA + (sulfur carrier)-H + 5'-deoxyadenosine + L-methionine + A + S-adenosyl-L-homocysteine + 2 H(+). Functionally, catalyzes the methylthiolation of N6-(dimethylallyl)adenosine (i(6)A), leading to the formation of 2-methylthio-N6-(dimethylallyl)adenosine (ms(2)i(6)A) at position 37 in tRNAs that read codons beginning with uridine. The protein is tRNA-2-methylthio-N(6)-dimethylallyladenosine synthase of Prochlorococcus marinus (strain SARG / CCMP1375 / SS120).